Here is a 488-residue protein sequence, read N- to C-terminus: Coagulation factor X (488 aa).

A signal peptide spans 1–31 (MGRPLHLVLLSASLAGLLLLGESLFIRREQA). Residues 32 to 40 (NNILARVTR) constitute a propeptide that is removed on maturation. The Gla domain occupies 41–85 (ANSFLEEMKKGHLERECMEETCSYEEAREVFEDSDKTNEFWNKYK). 11 positions are modified to 4-carboxyglutamate: glutamate 46, glutamate 47, glutamate 54, glutamate 56, glutamate 59, glutamate 60, glutamate 65, glutamate 66, glutamate 69, glutamate 72, and glutamate 79. Cysteine 57 and cysteine 62 are oxidised to a cystine. Residues 86-122 (DGDQCETSPCQNQGKCKDGLGEYTCTCLEGFEGKNCE) enclose the EGF-like 1; calcium-binding domain. 11 cysteine pairs are disulfide-bonded: cysteine 90/cysteine 101, cysteine 95/cysteine 110, cysteine 112/cysteine 121, cysteine 129/cysteine 140, cysteine 136/cysteine 149, cysteine 151/cysteine 164, cysteine 172/cysteine 342, cysteine 241/cysteine 246, cysteine 261/cysteine 277, cysteine 390/cysteine 404, and cysteine 415/cysteine 443. A (3R)-3-hydroxyaspartate modification is found at aspartate 103. Residues 125-165 (TRKLCSLDNGDCDQFCHEEQNSVVCSCARGYTLADNGKACI) enclose the EGF-like 2 domain. Positions 183–203 (SVAQATSSSGEAPDSITWKPY) are O-glycosylated at one site. Positions 183–234 (SVAQATSSSGEAPDSITWKPYDAADLDPTENPFDLLDFNQTQPERGDNNLTR) are cleaved as a propeptide — activation peptide. Threonine 199 and threonine 211 each carry an O-linked (GalNAc...) threonine glycan. N-linked (GlcNAc...) asparagine glycosylation is found at asparagine 221 and asparagine 231. Residues 235–467 (IVGGQECKDG…FLKWIDRSMK (233 aa)) form the Peptidase S1 domain. Catalysis depends on charge relay system residues histidine 276 and aspartate 322. The active-site Charge relay system is serine 419. The O-glycosylated at one site stretch occupies residues 476–485 (SHAPEVITSS).

It belongs to the peptidase S1 family. In terms of assembly, the two chains are formed from a single-chain precursor by the excision of two Arg residues and are held together by 1 or more disulfide bonds. Forms a heterodimer with SERPINA5. Interacts (inactive and activated) with ixolaris, an anticoagulant protein from Ixodes scapularis saliva. Interacts (activated) with iripin-8, a serine protease inhibitor from Ixodes ricinus saliva. Interacts (activated) with FXa-directed anticoagulant from Aedes albopictus saliva. Interacts (activated) with guianensin, an anticoagulant protein from Simulium guianense saliva. Interacts (activated) with simukunin, an anticoagulant protein from Simulium vittatum saliva. The vitamin K-dependent, enzymatic carboxylation of some glutamate residues allows the modified protein to bind calcium. Post-translationally, N- and O-glycosylated. O-glycosylated with core 1 or possibly core 8 glycans. In terms of processing, proteolytically cleaved and activated by cathepsin CTSG. The activation peptide is cleaved by factor IXa (in the intrinsic pathway), or by factor VIIa (in the extrinsic pathway). The iron and 2-oxoglutarate dependent 3-hydroxylation of aspartate and asparagine is (R) stereospecific within EGF domains. Plasma; synthesized in the liver.

It localises to the secreted. The catalysed reaction is Selective cleavage of Arg-|-Thr and then Arg-|-Ile bonds in prothrombin to form thrombin.. With respect to regulation, inhibited by SERPINA5 and SERPINA10. Factor Xa is a vitamin K-dependent glycoprotein that converts prothrombin to thrombin in the presence of factor Va, calcium and phospholipid during blood clotting. Factor Xa activates pro-inflammatory signaling pathways in a protease-activated receptor (PAR)-dependent manner. Up-regulates expression of protease-activated receptors (PARs) F2R, F2RL1 and F2RL2 in dermal microvascular endothelial cells. Triggers the production of pro-inflammatory cytokines, such as MCP-1/CCL2 and IL6, in cardiac fibroblasts and umbilical vein endothelial cells in PAR-1/F2R-dependent manner. Triggers the production of pro-inflammatory cytokines, such as MCP-1/CCL2, IL6, TNF-alpha/TNF, IL-1beta/IL1B, IL8/CXCL8 and IL18, in endothelial cells and atrial tissues. Induces expression of adhesion molecules, such as ICAM1, VCAM1 and SELE, in endothelial cells and atrial tissues. Increases expression of phosphorylated ERK1/2 in dermal microvascular endothelial cells and atrial tissues. Triggers activation of the transcription factor NF-kappa-B in dermal microvascular endothelial cells and atrial tissues. Activates pro-inflammatory and pro-fibrotic responses in dermal fibroblasts and enhances wound healing probably via PAR-2/F2RL1-dependent mechanism. Activates barrier protective signaling responses in endothelial cells in PAR-2/F2RL1-dependent manner; the activity depends on the cleavage of PAR-2/F2RL1 by factor Xa. Up-regulates expression of plasminogen activator inhibitor 1 (SERPINE1) in atrial tissues. This chain is Coagulation factor X (F10), found in Homo sapiens (Human).